The primary structure comprises 453 residues: Trigger factor (453 aa).

The region spanning 171–256 (GDRVTISFKG…ATVLEAPQES (86 aa)) is the PPIase FKBP-type domain.

It belongs to the FKBP-type PPIase family. Tig subfamily.

It is found in the cytoplasm. The enzyme catalyses [protein]-peptidylproline (omega=180) = [protein]-peptidylproline (omega=0). Its function is as follows. Involved in protein export. Acts as a chaperone by maintaining the newly synthesized protein in an open conformation. Functions as a peptidyl-prolyl cis-trans isomerase. The protein is Trigger factor of Rhodopseudomonas palustris (strain BisB18).